Consider the following 504-residue polypeptide: MTLYLDGETLTIEDIKSFLQQQSKIEIIDDALERVKKSRAVVERIIENEETVYGITTGFGLFSDVRIDPTQYNELQVNLIRSHACGLGEPFSKEVALVMMILRLNTLLKGHSGATLELVRQLQFFINERIIPIIPQQGSLGASGDLAPLSHLALALIGEGKVLYRGEEKDSDDVLRELNRQPLNLQAKEGLALINGTQAMTAQGVISYIESEDLGYQSEWIAALTHQSLNGIIDAYRHDVHAVRNFQEQINVAARMRDWLEGSTLTTRQAEIRVQDAYTLRCIPQIHGASFQVFNYVKQQLEFEMNAANDNPLIFEEANETFVISGGNFHGQPIAFALDHLKLGVSELANVSERRLERLVNPQLNGDLPAFLSPEPGLQSGAMIMQYAAASLVSENKTLAHPASVDSITSSANQEDHVSMGTTAARHGYQIIENARRVLAIECVIALQAAELKGVEGLSPKTRRKYEEFRSIVPSITHDRQFHKDIEAVAQYLKQSIYQTTACH.

Positions 142–144 (ASG) form a cross-link, 5-imidazolinone (Ala-Gly). Ser143 bears the 2,3-didehydroalanine (Ser) mark.

It belongs to the PAL/histidase family. Post-translationally, contains an active site 4-methylidene-imidazol-5-one (MIO), which is formed autocatalytically by cyclization and dehydration of residues Ala-Ser-Gly.

It localises to the cytoplasm. The enzyme catalyses L-histidine = trans-urocanate + NH4(+). Its pathway is amino-acid degradation; L-histidine degradation into L-glutamate; N-formimidoyl-L-glutamate from L-histidine: step 1/3. This chain is Histidine ammonia-lyase, found in Staphylococcus aureus (strain MSSA476).